The primary structure comprises 95 residues: Aspartyl/glutamyl-tRNA(Asn/Gln) amidotransferase subunit C (95 aa).

The protein belongs to the GatC family. Heterotrimer of A, B and C subunits.

It carries out the reaction L-glutamyl-tRNA(Gln) + L-glutamine + ATP + H2O = L-glutaminyl-tRNA(Gln) + L-glutamate + ADP + phosphate + H(+). It catalyses the reaction L-aspartyl-tRNA(Asn) + L-glutamine + ATP + H2O = L-asparaginyl-tRNA(Asn) + L-glutamate + ADP + phosphate + 2 H(+). Its function is as follows. Allows the formation of correctly charged Asn-tRNA(Asn) or Gln-tRNA(Gln) through the transamidation of misacylated Asp-tRNA(Asn) or Glu-tRNA(Gln) in organisms which lack either or both of asparaginyl-tRNA or glutaminyl-tRNA synthetases. The reaction takes place in the presence of glutamine and ATP through an activated phospho-Asp-tRNA(Asn) or phospho-Glu-tRNA(Gln). In Rhodopseudomonas palustris (strain BisB5), this protein is Aspartyl/glutamyl-tRNA(Asn/Gln) amidotransferase subunit C.